A 73-amino-acid chain; its full sequence is Translation initiation factor IF-1 (73 aa).

Residues 1-73 (MAKKDGVIEI…NRGRIVYRYR (73 aa)) form the S1-like domain.

The protein belongs to the IF-1 family. In terms of assembly, component of the 30S ribosomal translation pre-initiation complex which assembles on the 30S ribosome in the order IF-2 and IF-3, IF-1 and N-formylmethionyl-tRNA(fMet); mRNA recruitment can occur at any time during PIC assembly.

The protein resides in the cytoplasm. In terms of biological role, one of the essential components for the initiation of protein synthesis. Stabilizes the binding of IF-2 and IF-3 on the 30S subunit to which N-formylmethionyl-tRNA(fMet) subsequently binds. Helps modulate mRNA selection, yielding the 30S pre-initiation complex (PIC). Upon addition of the 50S ribosomal subunit IF-1, IF-2 and IF-3 are released leaving the mature 70S translation initiation complex. In Acidothermus cellulolyticus (strain ATCC 43068 / DSM 8971 / 11B), this protein is Translation initiation factor IF-1.